We begin with the raw amino-acid sequence, 463 residues long: tRNA modification GTPase MnmE (463 aa).

(6S)-5-formyl-5,6,7,8-tetrahydrofolate-binding residues include R29, E91, and R130. Residues 225–384 (GLKVAIVGRP…LETAILEIVQ (160 aa)) enclose the TrmE-type G domain. Position 235 (N235) interacts with K(+). GTP contacts are provided by residues 235 to 240 (NVGKSS), 254 to 260 (TDLPGTT), and 279 to 282 (DTAG). S239 provides a ligand contact to Mg(2+). Residues T254, L256, and T259 each contribute to the K(+) site. Mg(2+) is bound at residue T260. K463 serves as a coordination point for (6S)-5-formyl-5,6,7,8-tetrahydrofolate.

Belongs to the TRAFAC class TrmE-Era-EngA-EngB-Septin-like GTPase superfamily. TrmE GTPase family. Homodimer. Heterotetramer of two MnmE and two MnmG subunits. It depends on K(+) as a cofactor.

The protein resides in the cytoplasm. Exhibits a very high intrinsic GTPase hydrolysis rate. Involved in the addition of a carboxymethylaminomethyl (cmnm) group at the wobble position (U34) of certain tRNAs, forming tRNA-cmnm(5)s(2)U34. The protein is tRNA modification GTPase MnmE of Trichormus variabilis (strain ATCC 29413 / PCC 7937) (Anabaena variabilis).